The chain runs to 324 residues: Non-homologous end joining protein Ku 1 (324 aa).

The Ku domain occupies 10 to 193 (INFGLVTIPV…AKPSDKEIQM (184 aa)). A disordered region spans residues 256-324 (QARRGRGGQV…SGGRRRRRAS (69 aa)). The segment covering 281–292 (AELDKKAKELGI) has biased composition (basic and acidic residues).

The protein belongs to the prokaryotic Ku family. In terms of assembly, homodimer. Interacts with LigD.

Its function is as follows. With LigD forms a non-homologous end joining (NHEJ) DNA repair enzyme, which repairs dsDNA breaks with reduced fidelity. Binds linear dsDNA with 5'- and 3'- overhangs but not closed circular dsDNA nor ssDNA. Recruits and stimulates the ligase activity of LigD. The chain is Non-homologous end joining protein Ku 1 from Saccharopolyspora erythraea (strain ATCC 11635 / DSM 40517 / JCM 4748 / NBRC 13426 / NCIMB 8594 / NRRL 2338).